A 577-amino-acid polypeptide reads, in one-letter code: BAG family molecular chaperone regulator 3 (577 aa).

The segment covering 1–17 has biased composition (polar residues); sequence MSAATQSPMMQMASGNG. Disordered regions lie at residues 1–81, 126–207, and 229–427; these read MSAA…LLPI, TEAA…SHQL, and PSFH…HPGV. Residue serine 2 is modified to N-acetylserine. 2 WW domains span residues 22-56 and 126-157; these read DPLP…DPRV and TEAA…CGQM. Position 138 is a phosphoserine (serine 138). Omega-N-methylarginine is present on arginine 141. A compositionally biased stretch (low complexity) spans 158-204; the sequence is PATATTAAAQPPTAHGPERSQSPAASDCSSSSSSASLPSSGRSSLGS. A phosphoserine mark is found at serine 179 and serine 204. Residues 256–265 are compositionally biased toward basic and acidic residues; that stretch reads IQGDDWEPRP. Omega-N-methylarginine is present on arginine 267. Serine 280, serine 281, and serine 285 each carry phosphoserine. Threonine 291 carries the phosphothreonine modification. Serine 297 is modified (phosphoserine). Composition is skewed to pro residues over residues 332–341 and 376–392; these read PAGPDLPPGH and IPCP…PSPP. Phosphoserine occurs at positions 380, 382, and 390. Positions 426–503 constitute a BAG domain; sequence GVLKVEAILE…TILEKLEQKA (78 aa). Lysine 450 is covalently cross-linked (Glycyl lysine isopeptide (Lys-Gly) (interchain with G-Cter in SUMO1); alternate). A Glycyl lysine isopeptide (Lys-Gly) (interchain with G-Cter in SUMO2); alternate cross-link involves residue lysine 450. The segment at 524–577 is disordered; that stretch reads QPLQEIMGAVVADKDKKGPENKDPQTESQQLEAKAATPPNPSNPADSAGNLVAP. The segment covering 535-548 has biased composition (basic and acidic residues); that stretch reads ADKDKKGPENKDPQ.

Forms a ternary complex with HSPA1A/HSP70 and HSPB8, serving as scaffold subunit. Component of the chaperone-assisted selective autophagy (CASA) complex consisting of BAG3, HSPA8/HSC70, HSPB8 and STUB1/CHIP. Binds to the ATPase domain of HSP70 chaperones. Interacts with BCL2. Interacts with phospholipase C-gamma proteins. Interacts with DNAJB1 and DNAJB6. Interacts (via BAG domain) with HSF1; this interaction occurs in normal and heat-shocked cells. Interacts with HSPA8/HSC70 (via NBD), HSPA1A (via NBD) and HSPA1B (via NBD). Interacts (via WW domain 1) with SYNPO2 (via PPPY motif). Interacts with HSPB8.

The protein resides in the nucleus. It localises to the cytoplasm. In terms of biological role, co-chaperone and adapter protein that connects different classes of molecular chaperones including heat shock proteins 70 (HSP70s), e.g. HSPA1A/HSP70 or HSPA8/HSC70, and small heat shock proteins (sHSPs), e.g. HSPB8. Acts as a nucleotide-exchange factor (NEF) promoting the release of ADP from HSP70s, thereby triggering client protein release. Nucleotide release is mediated via BAG3 binding to the nucleotide-binding domain (NBD) of HSP70s, whereas client release is mediated via its binding to the substrate-binding domain (SBD). Has anti-apoptotic activity. Plays a role in the HSF1 nucleocytoplasmic transport. In Mus musculus (Mouse), this protein is BAG family molecular chaperone regulator 3 (Bag3).